We begin with the raw amino-acid sequence, 307 residues long: Oxygen-dependent coproporphyrinogen-III oxidase (307 aa).

Ser99 lines the substrate pocket. Residues His103 and His113 each contribute to the a divalent metal cation site. Residue His113 is the Proton donor of the active site. 115-117 contributes to the substrate binding site; that stretch reads NVR. A divalent metal cation-binding residues include His152 and His182. The important for dimerization stretch occupies residues 247 to 282; the sequence is YVEFNLVFDRGTLFGLQSGGRTESILMSMPPVANWR. Substrate is bound at residue 265–267; that stretch reads GGR.

Belongs to the aerobic coproporphyrinogen-III oxidase family. As to quaternary structure, homodimer. It depends on a divalent metal cation as a cofactor.

It is found in the cytoplasm. It carries out the reaction coproporphyrinogen III + O2 + 2 H(+) = protoporphyrinogen IX + 2 CO2 + 2 H2O. Its pathway is porphyrin-containing compound metabolism; protoporphyrin-IX biosynthesis; protoporphyrinogen-IX from coproporphyrinogen-III (O2 route): step 1/1. In terms of biological role, involved in the heme biosynthesis. Catalyzes the aerobic oxidative decarboxylation of propionate groups of rings A and B of coproporphyrinogen-III to yield the vinyl groups in protoporphyrinogen-IX. The sequence is that of Oxygen-dependent coproporphyrinogen-III oxidase from Burkholderia lata (strain ATCC 17760 / DSM 23089 / LMG 22485 / NCIMB 9086 / R18194 / 383).